Consider the following 200-residue polypeptide: Recombination protein RecR (200 aa).

The segment at 57-72 (CQHCRTFTENSLCDIC) adopts a C4-type zinc-finger fold. Residues 81 to 176 (GQLCIVETPA…NITRIAHGVP (96 aa)) enclose the Toprim domain.

It belongs to the RecR family.

In terms of biological role, may play a role in DNA repair. It seems to be involved in an RecBC-independent recombinational process of DNA repair. It may act with RecF and RecO. This Tolumonas auensis (strain DSM 9187 / NBRC 110442 / TA 4) protein is Recombination protein RecR.